Reading from the N-terminus, the 66-residue chain is Large ribosomal subunit protein bL35 (66 aa).

Belongs to the bacterial ribosomal protein bL35 family.

The sequence is that of Large ribosomal subunit protein bL35 from Cereibacter sphaeroides (strain ATCC 17029 / ATH 2.4.9) (Rhodobacter sphaeroides).